The chain runs to 218 residues: Thiopurine S-methyltransferase (218 aa).

Residues W10, L45, E66, and R123 each contribute to the S-adenosyl-L-methionine site.

This sequence belongs to the class I-like SAM-binding methyltransferase superfamily. TPMT family.

The protein resides in the cytoplasm. The enzyme catalyses S-adenosyl-L-methionine + a thiopurine = S-adenosyl-L-homocysteine + a thiopurine S-methylether.. This Shewanella baltica (strain OS195) protein is Thiopurine S-methyltransferase.